Here is a 622-residue protein sequence, read N- to C-terminus: Chaperone protein HscA homolog (622 aa).

This sequence belongs to the heat shock protein 70 family.

In terms of biological role, chaperone involved in the maturation of iron-sulfur cluster-containing proteins. Has a low intrinsic ATPase activity which is markedly stimulated by HscB. The sequence is that of Chaperone protein HscA homolog from Azoarcus sp. (strain BH72).